Reading from the N-terminus, the 343-residue chain is Aspartate beta-hydroxylase domain-containing protein 2 (343 aa).

Residues Met-1 to Asp-31 are Cytoplasmic-facing. A helical membrane pass occupies residues Gly-32 to Val-52. Topologically, residues Gly-53–Arg-343 are lumenal. Residues Asn-77 and Asn-185 are each glycosylated (N-linked (GlcNAc...) asparagine). Trp-202 and Ser-246 together coordinate 2-oxoglutarate. Residue His-257 participates in Fe cation binding. Arg-266–His-268 contributes to the 2-oxoglutarate binding site. His-302 provides a ligand contact to Fe cation. Position 315 (Arg-315) interacts with 2-oxoglutarate.

Belongs to the aspartyl/asparaginyl beta-hydroxylase family. Requires Fe cation as cofactor.

It localises to the membrane. Its function is as follows. May function as 2-oxoglutarate-dependent dioxygenase. In Mus musculus (Mouse), this protein is Aspartate beta-hydroxylase domain-containing protein 2 (Asphd2).